Here is a 338-residue protein sequence, read N- to C-terminus: Formamidase (338 aa).

The region spanning 15–257 (VVIGLAQLAL…DEIVCCELRP (243 aa)) is the CN hydrolase domain. Catalysis depends on Glu61, which acts as the Proton acceptor. Catalysis depends on Lys130, which acts as the Proton donor. Cys163 (nucleophile) is an active-site residue.

Belongs to the carbon-nitrogen hydrolase superfamily. Aliphatic amidase family.

It catalyses the reaction formamide + H2O = formate + NH4(+). In terms of biological role, is an aliphatic amidase with a restricted substrate specificity, as it only hydrolyzes formamide. The chain is Formamidase from Pseudomonas syringae pv. syringae (strain B728a).